The following is a 632-amino-acid chain: ATP-dependent DNA helicase RecQ (632 aa).

Positions Ile-47–His-215 constitute a Helicase ATP-binding domain. Met-60–Ser-67 serves as a coordination point for ATP. A DEAH box motif is present at residues Asp-159 to His-162. A Helicase C-terminal domain is found at Pro-236–Gly-385. Residues Cys-393, Cys-410, Cys-413, and Cys-416 each coordinate Zn(2+). Residues Ala-544–His-624 enclose the HRDC domain.

This sequence belongs to the helicase family. RecQ subfamily. The cofactor is Mg(2+). It depends on Zn(2+) as a cofactor.

It carries out the reaction Couples ATP hydrolysis with the unwinding of duplex DNA by translocating in the 3'-5' direction.. The enzyme catalyses ATP + H2O = ADP + phosphate + H(+). An ATP-dependent DNA helicase which unwinds DNA in a 3'-5' direction. Plays a role in recombination. The protein is ATP-dependent DNA helicase RecQ of Pasteurella multocida (strain Pm70).